Here is a 2792-residue protein sequence, read N- to C-terminus: E3 ubiquitin-protein ligase UBR5 (2792 aa).

The residue at position 2 (T2) is an N-acetylthreonine. Over residues 77–88 the composition is skewed to basic and acidic residues; sequence DRLELGKPDNND. The interval 77 to 175 is disordered; it reads DRLELGKPDN…DRGSGLLGSQ (99 aa). The span at 94–111 shows a compositional bias: low complexity; sequence SSSGTGRTSRPGRTSDSP. Phosphoserine is present on S110. Residues 135-144 show a composition bias toward gly residues; it reads GVGGSGGGSS. The UBA domain maps to 184 to 226; that stretch reads VIPEELISQAQVVLQGKSRSVIIRELQRTNLDVNLAVNNLLSR. S321 carries the phosphoserine modification. Over residues 322–341 the composition is skewed to basic and acidic residues; sequence FDNERGSTSKEGESNPDKKN. Residues 322-347 are disordered; it reads FDNERGSTSKEGESNPDKKNTPVQSP. Residues S346 and S572 each carry the phosphoserine modification. A compositionally biased stretch (basic and acidic residues) spans 577–598; that stretch reads KSMEKASKTLETKPESKQEPVK. Residues 577–642 are disordered; sequence KSMEKASKTL…APREEEKVNE (66 aa). S606 carries the phosphoserine modification. Over residues 608 to 622 the composition is skewed to low complexity; it reads ASTCSDASSIASSAS. Position 631 is a phosphothreonine (T631). Residues S802, S922, and S1012 each carry the phosphoserine modification. Disordered regions lie at residues 993–1029 and 1046–1069; these read AGLG…SMDP and TAAT…EPSV. Residues 1011–1027 show a composition bias toward pro residues; the sequence is VSPPIAPPSWVPDPPSM. A compositionally biased stretch (polar residues) spans 1046–1067; that stretch reads TAATGSGQGPSTSTIPGPSTEP. A phosphothreonine mark is found at T1109 and T1129. The segment at 1171-1239 adopts a UBR-type zinc-finger fold; sequence DTCSFTWTGA…EKCKCKTLIA (69 aa). Phosphoserine is present on residues S1221, S1302, S1349, S1369, and S1475. The disordered stretch occupies residues 1293–1312; the sequence is REDRNRKTASPEDSDMPDHD. The tract at residues 1509-1734 is disordered; the sequence is SVEPLPPRPS…PSSTSTPAAS (226 aa). The segment covering 1518–1531 has biased composition (low complexity); it reads SSDQASSSSQSQSS. The span at 1532 to 1547 shows a compositional bias: polar residues; it reads YIIRNPQQRRISQSQP. At S1543 the chain carries Phosphoserine. 2 stretches are compositionally biased toward acidic residues: residues 1553 to 1568 and 1599 to 1608; these read EEQD…EVEV and HDEDGSDMEL. Positions 1623–1632 are enriched in polar residues; that stretch reads NHSNQDNASG. 3 stretches are compositionally biased toward low complexity: residues 1635–1651, 1662–1675, and 1720–1734; these read SVVT…ASSV, SNDS…SSQS, and AAST…PAAS. T1730 bears the Phosphothreonine mark. S1735 bears the Phosphoserine mark. The residue at position 1740 (Y1740) is a Phosphotyrosine. A Phosphoserine modification is found at S1774. Residues 1853–1884 are disordered; that stretch reads LASAGDPGHPNHPLHASQNSARRERMTAREEA. The segment covering 1873–1884 has biased composition (basic and acidic residues); it reads ARRERMTAREEA. T1963 bears the Phosphothreonine mark. Residues 1978 to 2015 form a disordered region; it reads GIDNEDSEHENDDDTSQSATLNDKDDDSLPAETGQNHP. Residues 1979-1992 are compositionally biased toward acidic residues; sequence IDNEDSEHENDDDT. A phosphoserine mark is found at S1984, S2020, and S2022. Residue T2024 is modified to Phosphothreonine. S2070 carries the post-translational modification Phosphoserine. The segment at 2111-2137 is disordered; it reads RQKKEGEEQSLLAEEADSSKPGPSAPD. The residue at position 2207 (T2207) is a Phosphothreonine. S2235 and S2283 each carry phosphoserine. Residues 2317 to 2387 are disordered; the sequence is HTSLMQRLRN…SDDPDPLPAH (71 aa). 2 stretches are compositionally biased toward basic and acidic residues: residues 2326–2342 and 2350–2362; these read NRGE…EMRR and SRRD…RRQL. Positions 2371–2448 constitute a PABC domain; the sequence is PASEGNPSDD…AMELIIAHGR (78 aa). The 338-residue stretch at 2455 to 2792 folds into the HECT domain; that stretch reads ILDLGLLDSS…AIKTKNFGFV (338 aa). S2463, S2477, and S2479 each carry phosphoserine. Residues 2467 to 2494 are disordered; the sequence is VQENRKRHGSSRSVVDMDLEDTDDGDDN. A compositionally biased stretch (acidic residues) spans 2483–2493; it reads MDLEDTDDGDD. The active-site Glycyl thioester intermediate is the C2761.

The protein belongs to the UBR5 family. In terms of assembly, homotetramer; composed of a dimer of dimers. Associates with CDK9 and TFIIS/TCEA1 and forms a transcription regulatory complex made of CDK9, RNAP II, UBR5 and TFIIS/TCEA1 that can stimulate target gene transcription (e.g. gamma fibrinogen/FGG) by recruiting their promoters. Associates with the E3 ligase complex containing DYRK2, EDD/UBR5, DDB1 and DCAF1 proteins (EDVP complex). Binds TOPBP1. Interacts with PIH1D1. Interacts with CIB1.

The protein resides in the nucleus. It localises to the cytoplasm. The enzyme catalyses S-ubiquitinyl-[E2 ubiquitin-conjugating enzyme]-L-cysteine + [acceptor protein]-L-lysine = [E2 ubiquitin-conjugating enzyme]-L-cysteine + N(6)-ubiquitinyl-[acceptor protein]-L-lysine.. It functions in the pathway protein modification; protein ubiquitination. Functionally, E3 ubiquitin-protein ligase involved in different protein quality control pathways in the cytoplasm and nucleus. Mainly acts as a ubiquitin chain elongator that extends pre-ubiquitinated substrates. Component of the N-end rule pathway: ubiquitinates proteins bearing specific N-terminal residues that are destabilizing according to the N-end rule, leading to their degradation. Recognizes type-1 N-degrons, containing positively charged amino acids (Arg, Lys and His). Together with UBR4, part of a cytoplasm protein quality control pathway that prevents protein aggregation by catalyzing assembly of heterotypic 'Lys-11'-/'Lys-48'-linked branched ubiquitin chains on aggregated proteins, leading to substrate recognition by the segregase p97/VCP and degradation by the proteasome: UBR5 is probably branching multiple 'Lys-48'-linked chains of substrates initially modified with mixed conjugates by UBR4. Together with ITCH, catalyzes 'Lys-48'-/'Lys-63'-branched ubiquitination of TXNIP, leading to its degradation: UBR5 mediates branching of 'Lys-48'-linked chains of substrates initially modified with 'Lys-63'-linked conjugates by ITCH. Catalytic component of a nuclear protein quality control pathway that mediates ubiquitination and degradation of unpaired transcription factors (i.e. transcription factors that are not assembled into functional multiprotein complexes): specifically recognizes and binds degrons that are not accessible when transcription regulators are associated with their coactivators. Ubiquitinates various unpaired transcription regulator (MYC, SUPT4H1, SUPT5H, CDC20 and MCRS1), as well as ligand-bound nuclear receptors (ESR1, NR1H3, NR3C1, PGR, RARA, RXRA AND VDR) that are not associated with their nuclear receptor coactivators (NCOAs). Involved in maturation and/or transcriptional regulation of mRNA by mediating polyubiquitination and activation of CDK9. Also acts as a regulator of DNA damage response by acting as a suppressor of RNF168, an E3 ubiquitin-protein ligase that promotes accumulation of 'Lys-63'-linked histone H2A and H2AX at DNA damage sites, thereby acting as a guard against excessive spreading of ubiquitinated chromatin at damaged chromosomes. Regulates DNA topoisomerase II binding protein (TopBP1) in the DNA damage response. Ubiquitinates acetylated PCK1. Acts as a positive regulator of the canonical Wnt signaling pathway by mediating (1) ubiquitination and stabilization of CTNNB1, and (2) 'Lys-48'-linked ubiquitination and degradation of TLE3. Promotes disassembly of the mitotic checkpoint complex (MCC) from the APC/C complex by catalyzing ubiquitination of BUB1B, BUB3 and CDC20. Plays an essential role in extraembryonic development. Required for the maintenance of skeletal tissue homeostasis by acting as an inhibitor of hedgehog (HH) signaling. The polypeptide is E3 ubiquitin-protein ligase UBR5 (Mus musculus (Mouse)).